The chain runs to 1509 residues: DNA-directed RNA polymerase subunit beta' (1509 aa).

Positions 75, 77, 90, and 93 each coordinate Zn(2+). Asp474, Asp476, and Asp478 together coordinate Mg(2+). Residues Cys804, Cys878, Cys885, and Cys888 each contribute to the Zn(2+) site.

It belongs to the RNA polymerase beta' chain family. The RNAP catalytic core consists of 2 alpha, 1 beta, 1 beta' and 1 omega subunit. When a sigma factor is associated with the core the holoenzyme is formed, which can initiate transcription. It depends on Mg(2+) as a cofactor. Zn(2+) serves as cofactor.

The catalysed reaction is RNA(n) + a ribonucleoside 5'-triphosphate = RNA(n+1) + diphosphate. Functionally, DNA-dependent RNA polymerase catalyzes the transcription of DNA into RNA using the four ribonucleoside triphosphates as substrates. The protein is DNA-directed RNA polymerase subunit beta' of Sulfurovum sp. (strain NBC37-1).